The sequence spans 732 residues: Polyribonucleotide nucleotidyltransferase (732 aa).

D516 and D522 together coordinate Mg(2+). The region spanning 582–642 (PSSHTITVHP…PKVIAACDYI (61 aa)) is the KH domain. The S1 motif domain occupies 659 to 726 (GDILKGKIKR…KGHKIELGLR (68 aa)).

The protein belongs to the polyribonucleotide nucleotidyltransferase family. Mg(2+) is required as a cofactor.

It is found in the cytoplasm. It carries out the reaction RNA(n+1) + phosphate = RNA(n) + a ribonucleoside 5'-diphosphate. In terms of biological role, involved in mRNA degradation. Catalyzes the phosphorolysis of single-stranded polyribonucleotides processively in the 3'- to 5'-direction. This is Polyribonucleotide nucleotidyltransferase from Nitratiruptor sp. (strain SB155-2).